Here is a 313-residue protein sequence, read N- to C-terminus: Porphobilinogen deaminase (313 aa).

At Cys242 the chain carries S-(dipyrrolylmethanemethyl)cysteine.

Belongs to the HMBS family. As to quaternary structure, monomer. It depends on dipyrromethane as a cofactor.

It carries out the reaction 4 porphobilinogen + H2O = hydroxymethylbilane + 4 NH4(+). Its pathway is porphyrin-containing compound metabolism; protoporphyrin-IX biosynthesis; coproporphyrinogen-III from 5-aminolevulinate: step 2/4. Functionally, tetrapolymerization of the monopyrrole PBG into the hydroxymethylbilane pre-uroporphyrinogen in several discrete steps. The polypeptide is Porphobilinogen deaminase (Salmonella dublin (strain CT_02021853)).